Here is a 133-residue protein sequence, read N- to C-terminus: Small ribosomal subunit protein uS12 (133 aa).

Aspartate 89 bears the 3-methylthioaspartic acid mark. The disordered stretch occupies residues 103–133 (DTAGVAGRTQRRSKYGAKRPKPGQAAPAKKK). Residues 111-123 (TQRRSKYGAKRPK) show a composition bias toward basic residues. Residues 124–133 (PGQAAPAKKK) show a composition bias toward low complexity.

This sequence belongs to the universal ribosomal protein uS12 family. As to quaternary structure, part of the 30S ribosomal subunit. Contacts proteins S8 and S17. May interact with IF1 in the 30S initiation complex.

Functionally, with S4 and S5 plays an important role in translational accuracy. Interacts with and stabilizes bases of the 16S rRNA that are involved in tRNA selection in the A site and with the mRNA backbone. Located at the interface of the 30S and 50S subunits, it traverses the body of the 30S subunit contacting proteins on the other side and probably holding the rRNA structure together. The combined cluster of proteins S8, S12 and S17 appears to hold together the shoulder and platform of the 30S subunit. In Bacteroides thetaiotaomicron (strain ATCC 29148 / DSM 2079 / JCM 5827 / CCUG 10774 / NCTC 10582 / VPI-5482 / E50), this protein is Small ribosomal subunit protein uS12.